A 253-amino-acid chain; its full sequence is Tryptophan synthase alpha chain (253 aa).

Active-site proton acceptor residues include Glu47 and Asp58.

This sequence belongs to the TrpA family. Tetramer of two alpha and two beta chains.

The enzyme catalyses (1S,2R)-1-C-(indol-3-yl)glycerol 3-phosphate + L-serine = D-glyceraldehyde 3-phosphate + L-tryptophan + H2O. The protein operates within amino-acid biosynthesis; L-tryptophan biosynthesis; L-tryptophan from chorismate: step 5/5. The alpha subunit is responsible for the aldol cleavage of indoleglycerol phosphate to indole and glyceraldehyde 3-phosphate. The chain is Tryptophan synthase alpha chain from Lactococcus lactis subsp. cremoris (strain SK11).